The chain runs to 231 residues: Heptaprenylglyceryl phosphate synthase (231 aa).

Sn-glycerol 1-phosphate is bound at residue Lys12. Mg(2+) is bound by residues Asp14 and Thr40. Sn-glycerol 1-phosphate is bound by residues Tyr159–Gly164, Gly189, and Gly209–Asn210.

It belongs to the GGGP/HepGP synthase family. Group I subfamily. As to quaternary structure, homodimer. The cofactor is Mg(2+).

The enzyme catalyses sn-glycerol 1-phosphate + all-trans-heptaprenyl diphosphate = 3-heptaprenyl-sn-glycero-1-phosphate + diphosphate. It functions in the pathway membrane lipid metabolism; glycerophospholipid metabolism. Prenyltransferase that catalyzes in vivo the transfer of the heptaprenyl moiety of heptaprenyl pyrophosphate (HepPP; 35 carbon atoms) to the C3 hydroxyl of sn-glycerol-1-phosphate (G1P), producing heptaprenylglyceryl phosphate (HepGP). This reaction is an ether-bond-formation step in the biosynthesis of archaea-type G1P-based membrane lipids found in Bacillales. The polypeptide is Heptaprenylglyceryl phosphate synthase (Staphylococcus haemolyticus (strain JCSC1435)).